The chain runs to 142 residues: Large ribosomal subunit protein uL16 (142 aa).

Belongs to the universal ribosomal protein uL16 family. As to quaternary structure, part of the 50S ribosomal subunit.

In terms of biological role, binds 23S rRNA and is also seen to make contacts with the A and possibly P site tRNAs. The chain is Large ribosomal subunit protein uL16 from Pseudothermotoga lettingae (strain ATCC BAA-301 / DSM 14385 / NBRC 107922 / TMO) (Thermotoga lettingae).